The following is a 445-amino-acid chain: Trigger factor (445 aa).

Positions 166–251 constitute a PPIase FKBP-type domain; sequence GDVVVVDFVG…AKALKRPVDV (86 aa).

Belongs to the FKBP-type PPIase family. Tig subfamily.

Its subcellular location is the cytoplasm. The catalysed reaction is [protein]-peptidylproline (omega=180) = [protein]-peptidylproline (omega=0). In terms of biological role, involved in protein export. Acts as a chaperone by maintaining the newly synthesized protein in an open conformation. Functions as a peptidyl-prolyl cis-trans isomerase. The protein is Trigger factor of Gluconacetobacter diazotrophicus (strain ATCC 49037 / DSM 5601 / CCUG 37298 / CIP 103539 / LMG 7603 / PAl5).